We begin with the raw amino-acid sequence, 226 residues long: MKSIKLIAFDLDGTLLDSVPDLAVAADQAARAVGYPAVSEAQVRDYVGNGADVLIARALSQSLTINPELSPELRAQARHLFDEFYEQTGHKLSHLYPNVKTTLLELHQAGFILALVTNKPSKFVPDVLEQHGIAHFFSDVIGGDTFPNKKPDPMALNWLLEKHQLSAEQMLMVGDSKNDILAAKNAGCYSFGLTYGYNHGEPIANAEPDFVSDDIGTLLEVVLVSA.

The Nucleophile role is filled by aspartate 10. Mg(2+)-binding residues include aspartate 10, aspartate 12, and aspartate 175.

The protein belongs to the HAD-like hydrolase superfamily. CbbY/CbbZ/Gph/YieH family. Requires Mg(2+) as cofactor.

The enzyme catalyses 2-phosphoglycolate + H2O = glycolate + phosphate. Its pathway is organic acid metabolism; glycolate biosynthesis; glycolate from 2-phosphoglycolate: step 1/1. Its function is as follows. Specifically catalyzes the dephosphorylation of 2-phosphoglycolate. Is involved in the dissimilation of the intracellular 2-phosphoglycolate formed during the DNA repair of 3'-phosphoglycolate ends, a major class of DNA lesions induced by oxidative stress. This Vibrio cholerae serotype O1 (strain ATCC 39315 / El Tor Inaba N16961) protein is Phosphoglycolate phosphatase.